The primary structure comprises 260 residues: 3'-5' ssDNA/RNA exonuclease TatD (260 aa).

Residues Glu92, His128, and His153 each contribute to the a divalent metal cation site.

It belongs to the metallo-dependent hydrolases superfamily. TatD-type hydrolase family. TatD subfamily. Monomer. The cofactor is Mg(2+).

It is found in the cytoplasm. Its function is as follows. 3'-5' exonuclease that prefers single-stranded DNA and RNA. May play a role in the H(2)O(2)-induced DNA damage repair. This chain is 3'-5' ssDNA/RNA exonuclease TatD, found in Pantoea vagans (strain C9-1) (Pantoea agglomerans (strain C9-1)).